The primary structure comprises 363 residues: Chorismate synthase (363 aa).

Positions 48 and 54 each coordinate NADP(+). FMN-binding positions include 125 to 127 (RSS), 237 to 238 (NA), G277, 292 to 296 (KPTSS), and R318.

This sequence belongs to the chorismate synthase family. As to quaternary structure, homotetramer. FMNH2 is required as a cofactor.

It catalyses the reaction 5-O-(1-carboxyvinyl)-3-phosphoshikimate = chorismate + phosphate. It participates in metabolic intermediate biosynthesis; chorismate biosynthesis; chorismate from D-erythrose 4-phosphate and phosphoenolpyruvate: step 7/7. Its function is as follows. Catalyzes the anti-1,4-elimination of the C-3 phosphate and the C-6 proR hydrogen from 5-enolpyruvylshikimate-3-phosphate (EPSP) to yield chorismate, which is the branch point compound that serves as the starting substrate for the three terminal pathways of aromatic amino acid biosynthesis. This reaction introduces a second double bond into the aromatic ring system. In Stutzerimonas stutzeri (strain A1501) (Pseudomonas stutzeri), this protein is Chorismate synthase.